An 841-amino-acid chain; its full sequence is MSFFELDENSPKVDQPHGLKKVKLKDHQLTSIAAMRELETQASIVIDKPEIGSKFHASVGYCISDIEEFKDSTFVIETNSAILADKVGAGKTYTTIGLILKALVPKAHDRHITGTDNFSIKMISAKECEPVNLIVVPHNLINQWADFLDKSKLKYLKLNAESDFNAFLDIDYITKVYPLTREQISCKPIKNKPKKLPVKTTKKGGSKTQNKAQNDQKIYERKSLNMKKIRQALDTHNVFLLNVYRYKLFRQIFLTNKRKWARVIIDEMDSSAVPSIFDEYGNFNWFLTATPSAIFNRSCRRYVNKIFGQRQNLLNYFVVKNKEEYVDKSMILPKPFVFMINTMIQRVVAVFKDLIPQEVLQLINSGNMKEAITKLNCDVDTEENIIKILTGKINTELHNLETELEYVNNLIPQDVDAHENRKKNIMNNIARCKTKLESIKEKINSIKDECCFICTDPFENPTIMNCCKSIFCLKCLLTTLKTVGSKCPYCRHAIKSNKDYQIISSGGTSNKKKKSEIVGKYKFNEMDKADVLEQVLSYISKNDENPKILIFSDYSQTFEKITKNIAKANLQYAYLSGTPAHITNLITEFENGITNILMLNSQNFGSGLNLQSANYLILYHRMLPELETQVIGRAQRFGRKNNLRVIFMVNDNENRDCRLDSKPINILSDSELWMITNPTDLNEEPDEESDEGSDEDVEKSKDKKSSDKKSSDKKKSEKKSSDKKSSNKKNSKKKTYVKPKSSKKTSQKVKKTDSDNESELSGLSDSDDLDDSDDLGILSDSSDSDDFGNLSDSDDLSDSDESEIEIPKKSKKTSKSSKKNKIGGSNKTLKKKAPVRKLIKV.

The 238-residue stretch at 72–309 (STFVIETNSA…RRYVNKIFGQ (238 aa)) folds into the Helicase ATP-binding domain. 85–92 (DKVGAGKT) contributes to the ATP binding site. Over residues 195–205 (KLPVKTTKKGG) the composition is skewed to basic residues. Positions 195–215 (KLPVKTTKKGGSKTQNKAQND) are disordered. A compositionally biased stretch (polar residues) spans 206 to 215 (SKTQNKAQND). A DEAD box motif is present at residues 266–269 (DEMD). A coiled-coil region spans residues 413–450 (QDVDAHENRKKNIMNNIARCKTKLESIKEKINSIKDEC). The RING-type; degenerate zinc-finger motif lies at 451–491 (CFICTDPFENPTIMNCCKSIFCLKCLLTTLKTVGSKCPYCR). Positions 531–682 (VLEQVLSYIS…WMITNPTDLN (152 aa)) constitute a Helicase C-terminal domain. Residues 678–841 (PTDLNEEPDE…KAPVRKLIKV (164 aa)) are disordered. Positions 681-697 (LNEEPDEESDEGSDEDV) are enriched in acidic residues. A compositionally biased stretch (basic and acidic residues) spans 698-725 (EKSKDKKSSDKKSSDKKKSEKKSSDKKS). Basic residues predominate over residues 726 to 749 (SNKKNSKKKTYVKPKSSKKTSQKV). Composition is skewed to acidic residues over residues 765–774 (DSDDLDDSDD) and 782–804 (SDSD…ESEI). Composition is skewed to basic residues over residues 809 to 821 (KSKK…KKNK) and 828 to 841 (TLKK…LIKV).

This is Putative helicase R592 from Acanthamoeba polyphaga mimivirus (APMV).